The sequence spans 339 residues: Ketol-acid reductoisomerase (NADP(+)) (339 aa).

The region spanning 1–182 (MRVYYDRDAD…GGGRAGIIET (182 aa)) is the KARI N-terminal Rossmann domain. NADP(+)-binding positions include 24 to 27 (YGSQ), arginine 48, serine 51, threonine 53, and 83 to 86 (DELQ). Residue histidine 108 is part of the active site. Position 134 (glycine 134) interacts with NADP(+). The KARI C-terminal knotted domain occupies 183–328 (TFKEECETDL…AELRAMMPWI (146 aa)). Positions 191, 195, 227, and 231 each coordinate Mg(2+). Position 252 (serine 252) interacts with substrate.

This sequence belongs to the ketol-acid reductoisomerase family. The cofactor is Mg(2+).

The enzyme catalyses (2R)-2,3-dihydroxy-3-methylbutanoate + NADP(+) = (2S)-2-acetolactate + NADPH + H(+). The catalysed reaction is (2R,3R)-2,3-dihydroxy-3-methylpentanoate + NADP(+) = (S)-2-ethyl-2-hydroxy-3-oxobutanoate + NADPH + H(+). It participates in amino-acid biosynthesis; L-isoleucine biosynthesis; L-isoleucine from 2-oxobutanoate: step 2/4. Its pathway is amino-acid biosynthesis; L-valine biosynthesis; L-valine from pyruvate: step 2/4. Its function is as follows. Involved in the biosynthesis of branched-chain amino acids (BCAA). Catalyzes an alkyl-migration followed by a ketol-acid reduction of (S)-2-acetolactate (S2AL) to yield (R)-2,3-dihydroxy-isovalerate. In the isomerase reaction, S2AL is rearranged via a Mg-dependent methyl migration to produce 3-hydroxy-3-methyl-2-ketobutyrate (HMKB). In the reductase reaction, this 2-ketoacid undergoes a metal-dependent reduction by NADPH to yield (R)-2,3-dihydroxy-isovalerate. This is Ketol-acid reductoisomerase (NADP(+)) from Beijerinckia indica subsp. indica (strain ATCC 9039 / DSM 1715 / NCIMB 8712).